Reading from the N-terminus, the 345-residue chain is Protein GAMETE CELL DEFECTIVE 1, mitochondrial (345 aa).

A mitochondrion-targeting transit peptide spans Met1–Gly43. Residues Leu36–Pro82 form a disordered region.

Its subcellular location is the mitochondrion. Its function is as follows. Essential for fertility (male and female gametophyte functions and development). Required for the integrity of female gametic mitochondria. Involved in embryo apical-basal patterning, and particularly dorsal-ventral patterning, during early embryogenesis, and endosperm free nucleus positioning and development as well as early endosperm development, probably by modulating the expression pattern of related genes (e.g. AL1, MYB3/AL2, CYP78A13/GE, PNH1, HAZ1, MPK6 and OSH1). Has function in triggering of endosperm programmed cell death (PCD) leading to syncytial endosperm cellularization and starchy endosperm cell maturation. Implicated in central vacuole dynamics necessary for microspore development leading to pollen production, and for pollen development and germination. This is Protein GAMETE CELL DEFECTIVE 1, mitochondrial from Oryza sativa subsp. indica (Rice).